Reading from the N-terminus, the 280-residue chain is Urease accessory protein UreD (280 aa).

The protein belongs to the UreD family. UreD, UreF and UreG form a complex that acts as a GTP-hydrolysis-dependent molecular chaperone, activating the urease apoprotein by helping to assemble the nickel containing metallocenter of UreC. The UreE protein probably delivers the nickel.

The protein resides in the cytoplasm. Required for maturation of urease via the functional incorporation of the urease nickel metallocenter. The chain is Urease accessory protein UreD from Pseudomonas aeruginosa (strain UCBPP-PA14).